The following is a 592-amino-acid chain: UPF0329 protein ECU01_0110/ECU01_1500/ECU08_0040 (592 aa).

Composition is skewed to basic and acidic residues over residues 306 to 339 (RQRR…SKEK) and 353 to 362 (EAKEEEKKES). A disordered region spans residues 306–404 (RQRRREREIE…RKRYKIHRRV (99 aa)).

It belongs to the UPF0329 family.

The protein is UPF0329 protein ECU01_0110/ECU01_1500/ECU08_0040 of Encephalitozoon cuniculi (strain GB-M1) (Microsporidian parasite).